Here is a 186-residue protein sequence, read N- to C-terminus: MKAGPIELGEGKSSAPKAAVNRGVAILDFILRILAFIGTLGSAISMATTNETLPFFTQFIRFRAEYDDLPTFTFFVVANGVVSAYLLFSLPFSIFNIVRSKAQNSRILLIILDTAMLGLLSAGASAAAAIVYLAHQGNVRTNWSAICQQFNSFCERISGSLIGSFIGVVVFILLISLSAVALSRHK.

The Cytoplasmic portion of the chain corresponds to 1 to 23; that stretch reads MKAGPIELGEGKSSAPKAAVNRG. The helical transmembrane segment at 24–44 threads the bilayer; it reads VAILDFILRILAFIGTLGSAI. Over 45–73 the chain is Extracellular; that stretch reads SMATTNETLPFFTQFIRFRAEYDDLPTFT. N-linked (GlcNAc...) asparagine glycosylation occurs at asparagine 50. The helical transmembrane segment at 74 to 94 threads the bilayer; sequence FFVVANGVVSAYLLFSLPFSI. At 95-106 the chain is on the cytoplasmic side; the sequence is FNIVRSKAQNSR. A helical membrane pass occupies residues 107-127; sequence ILLIILDTAMLGLLSAGASAA. At 128 to 160 the chain is on the extracellular side; sequence AAIVYLAHQGNVRTNWSAICQQFNSFCERISGS. N-linked (GlcNAc...) asparagine glycosylation is present at asparagine 142. The helical transmembrane segment at 161-181 threads the bilayer; sequence LIGSFIGVVVFILLISLSAVA. Residues 182–186 lie on the Cytoplasmic side of the membrane; the sequence is LSRHK.

It belongs to the Casparian strip membrane proteins (CASP) family. In terms of assembly, homodimer and heterodimers.

The protein resides in the cell membrane. In terms of biological role, regulates membrane-cell wall junctions and localized cell wall deposition. Required for establishment of the Casparian strip membrane domain (CSD) and the subsequent formation of Casparian strips, a cell wall modification of the root endodermis that determines an apoplastic barrier between the intraorganismal apoplasm and the extraorganismal apoplasm and prevents lateral diffusion. The protein is Casparian strip membrane protein 6 of Populus trichocarpa (Western balsam poplar).